Here is a 354-residue protein sequence, read N- to C-terminus: Uroporphyrinogen decarboxylase (354 aa).

Substrate-binding positions include 27–31, D77, Y154, T209, and H327; that span reads RQAGR.

Belongs to the uroporphyrinogen decarboxylase family. As to quaternary structure, homodimer.

The protein resides in the cytoplasm. It carries out the reaction uroporphyrinogen III + 4 H(+) = coproporphyrinogen III + 4 CO2. It functions in the pathway porphyrin-containing compound metabolism; protoporphyrin-IX biosynthesis; coproporphyrinogen-III from 5-aminolevulinate: step 4/4. Catalyzes the decarboxylation of four acetate groups of uroporphyrinogen-III to yield coproporphyrinogen-III. In Shigella flexneri serotype 5b (strain 8401), this protein is Uroporphyrinogen decarboxylase.